Here is a 142-residue protein sequence, read N- to C-terminus: Ribosome-binding factor A (142 aa).

Belongs to the RbfA family. In terms of assembly, monomer. Binds 30S ribosomal subunits, but not 50S ribosomal subunits or 70S ribosomes.

Its subcellular location is the cytoplasm. In terms of biological role, one of several proteins that assist in the late maturation steps of the functional core of the 30S ribosomal subunit. Associates with free 30S ribosomal subunits (but not with 30S subunits that are part of 70S ribosomes or polysomes). Required for efficient processing of 16S rRNA. May interact with the 5'-terminal helix region of 16S rRNA. The chain is Ribosome-binding factor A from Leifsonia xyli subsp. xyli (strain CTCB07).